Consider the following 572-residue polypeptide: Proline--tRNA ligase (572 aa).

It belongs to the class-II aminoacyl-tRNA synthetase family. ProS type 1 subfamily. Homodimer.

The protein localises to the cytoplasm. The enzyme catalyses tRNA(Pro) + L-proline + ATP = L-prolyl-tRNA(Pro) + AMP + diphosphate. Its function is as follows. Catalyzes the attachment of proline to tRNA(Pro) in a two-step reaction: proline is first activated by ATP to form Pro-AMP and then transferred to the acceptor end of tRNA(Pro). As ProRS can inadvertently accommodate and process non-cognate amino acids such as alanine and cysteine, to avoid such errors it has two additional distinct editing activities against alanine. One activity is designated as 'pretransfer' editing and involves the tRNA(Pro)-independent hydrolysis of activated Ala-AMP. The other activity is designated 'posttransfer' editing and involves deacylation of mischarged Ala-tRNA(Pro). The misacylated Cys-tRNA(Pro) is not edited by ProRS. In Escherichia coli O17:K52:H18 (strain UMN026 / ExPEC), this protein is Proline--tRNA ligase.